The following is a 226-amino-acid chain: ATP synthase F(0) complex subunit a (226 aa).

The next 6 membrane-spanning stretches (helical) occupy residues 12-32 (PTVLGLPAAILVILFPPLLVP), 68-88 (WSLMLTSLIIFIASTNLLGLF), 97-117 (QLSMNLAMAIPLWASTVAMGL), 138-158 (IPMLIIIETISLFIQPLALAV), 164-184 (ITAGHLLMHLIGSATLTMLTI), and 189-209 (TLITLTILTLLTILEIAVALI).

It belongs to the ATPase A chain family. As to quaternary structure, component of the ATP synthase complex composed at least of ATP5F1A/subunit alpha, ATP5F1B/subunit beta, ATP5MC1/subunit c (homooctomer), MT-ATP6/subunit a, MT-ATP8/subunit 8, ATP5ME/subunit e, ATP5MF/subunit f, ATP5MG/subunit g, ATP5MK/subunit k, ATP5MJ/subunit j, ATP5F1C/subunit gamma, ATP5F1D/subunit delta, ATP5F1E/subunit epsilon, ATP5PF/subunit F6, ATP5PB/subunit b, ATP5PD/subunit d, ATP5PO/subunit OSCP. ATP synthase complex consists of a soluble F(1) head domain (subunits alpha(3) and beta(3)) - the catalytic core - and a membrane F(0) domain - the membrane proton channel (subunits c, a, 8, e, f, g, k and j). These two domains are linked by a central stalk (subunits gamma, delta, and epsilon) rotating inside the F1 region and a stationary peripheral stalk (subunits F6, b, d, and OSCP). Interacts with DNAJC30; interaction is direct.

Its subcellular location is the mitochondrion inner membrane. It carries out the reaction H(+)(in) = H(+)(out). Functionally, subunit a, of the mitochondrial membrane ATP synthase complex (F(1)F(0) ATP synthase or Complex V) that produces ATP from ADP in the presence of a proton gradient across the membrane which is generated by electron transport complexes of the respiratory chain. ATP synthase complex consist of a soluble F(1) head domain - the catalytic core - and a membrane F(1) domain - the membrane proton channel. These two domains are linked by a central stalk rotating inside the F(1) region and a stationary peripheral stalk. During catalysis, ATP synthesis in the catalytic domain of F(1) is coupled via a rotary mechanism of the central stalk subunits to proton translocation. With the subunit c (ATP5MC1), forms the proton-conducting channel in the F(0) domain, that contains two crucial half-channels (inlet and outlet) that facilitate proton movement from the mitochondrial intermembrane space (IMS) into the matrix. Protons are taken up via the inlet half-channel and released through the outlet half-channel, following a Grotthuss mechanism. This Pongo pygmaeus (Bornean orangutan) protein is ATP synthase F(0) complex subunit a.